The following is a 288-amino-acid chain: MAGAKEIRTKIASVRNTQKITKAMEMVAASKMRKTQERMSASRPYSDAIRKVISHIAKGSIDYKHPFLTEREVKKVGFIVVSTDRGLCGGLNINLFKTVLNELKTRKDKGVDSVLGLVGNKAVSFFQSMGVEIKAQVTGLGDTPAMEDLVGIVNGMIENYRNGEVDEVYIIYNRFVNTMSQKPTVQKLLPLPELEDDDLENKGSWDYIYEPNPKVLLDSLLVRYLESQVYQAIVDNLASEQAARMVAMKAATDNAGNLINELQLVYNKARQASITNELNEIVAGAAAI.

It belongs to the ATPase gamma chain family. As to quaternary structure, F-type ATPases have 2 components, CF(1) - the catalytic core - and CF(0) - the membrane proton channel. CF(1) has five subunits: alpha(3), beta(3), gamma(1), delta(1), epsilon(1). CF(0) has three main subunits: a, b and c.

Its subcellular location is the cell inner membrane. Produces ATP from ADP in the presence of a proton gradient across the membrane. The gamma chain is believed to be important in regulating ATPase activity and the flow of protons through the CF(0) complex. The sequence is that of ATP synthase gamma chain from Glaesserella parasuis serovar 5 (strain SH0165) (Haemophilus parasuis).